An 876-amino-acid polypeptide reads, in one-letter code: DNA double-strand break repair Rad50 ATPase (876 aa).

ATP-binding positions include arginine 11, 31–37 (NGAGKTT), and glutamine 139. 2 coiled-coil regions span residues 188 to 528 (RERV…EDRL) and 575 to 710 (SGVE…RKER). Residues 387–484 (EETLQSEYEE…RLESVRRELE (98 aa)) form the Zinc-hook domain. Zn(2+)-binding residues include cysteine 432 and cysteine 435.

Belongs to the SMC family. RAD50 subfamily. Homodimer. Forms a heterotetramer composed of two Mre11 subunits and two Rad50 subunits. Zn(2+) is required as a cofactor.

In terms of biological role, part of the Rad50/Mre11 complex, which is involved in the early steps of DNA double-strand break (DSB) repair. The complex may facilitate opening of the processed DNA ends to aid in the recruitment of HerA and NurA. Rad50 controls the balance between DNA end bridging and DNA resection via ATP-dependent structural rearrangements of the Rad50/Mre11 complex. The polypeptide is DNA double-strand break repair Rad50 ATPase (Methanopyrus kandleri (strain AV19 / DSM 6324 / JCM 9639 / NBRC 100938)).